Here is a 414-residue protein sequence, read N- to C-terminus: Apolipoprotein N-acyltransferase (414 aa).

Transmembrane regions (helical) follow at residues 19-39 (GIALFGAILFSLFIYLHHFGI), 40-60 (TSPLLYSLLALLALAFYLKLP), 63-83 (SGFAFGFWVGIAWFYWMALSF), 91-111 (LIPFILLGIGGVYGVLFSMAL), 121-141 (LLLWLLSHVQPFGFDWMVPEV), and 153-173 (LSFGLILLSLSLFWLLPQRWL). In terms of domain architecture, CN hydrolase spans 202 to 414 (IETHIPQEIR…NRSPSGIIAP (213 aa)). The active-site Proton acceptor is glutamate 243. The active site involves lysine 298. Cysteine 351 acts as the Nucleophile in catalysis.

The protein belongs to the CN hydrolase family. Apolipoprotein N-acyltransferase subfamily.

It is found in the cell inner membrane. It catalyses the reaction N-terminal S-1,2-diacyl-sn-glyceryl-L-cysteinyl-[lipoprotein] + a glycerophospholipid = N-acyl-S-1,2-diacyl-sn-glyceryl-L-cysteinyl-[lipoprotein] + a 2-acyl-sn-glycero-3-phospholipid + H(+). The protein operates within protein modification; lipoprotein biosynthesis (N-acyl transfer). Catalyzes the phospholipid dependent N-acylation of the N-terminal cysteine of apolipoprotein, the last step in lipoprotein maturation. The polypeptide is Apolipoprotein N-acyltransferase (Wolinella succinogenes (strain ATCC 29543 / DSM 1740 / CCUG 13145 / JCM 31913 / LMG 7466 / NCTC 11488 / FDC 602W) (Vibrio succinogenes)).